Reading from the N-terminus, the 282-residue chain is MKLLRYGPSGQEKPGILDADGRIRDLSAHVPDLSGDVLSDAGLARLRAIDPATLPLVSGEPRIGACVGHVGKFIGIGLNYADHAAEAGMPVPKEPVVFGKWTSSICGPNDGIDIPKGSVKTDWEVELGVVIGATCKDVDEARALDYVAGYCVVNDVSEREWQIERGGQWDKGKGFDTFGPIGPWLVTRDEVPDPQRLDLWLEIDGHRYQNGNTRTMVFTVAQLIAYLSSCMTLQPGDVITTGTPPGVGMGIKPSPVFLKAGQMVRLGVEGLGEQLQHTRDAR.

Residues glutamate 124, glutamate 126, and aspartate 155 each coordinate Mg(2+).

Belongs to the FAH family. The cofactor is Mg(2+).

The protein is Putative hydrolase Bcep18194_B0137 of Burkholderia lata (strain ATCC 17760 / DSM 23089 / LMG 22485 / NCIMB 9086 / R18194 / 383).